Consider the following 672-residue polypeptide: Poly-beta-1,6-N-acetyl-D-glucosamine N-deacetylase (672 aa).

The first 20 residues, 1–20 (MLRNGNKYLLMLVSIIMLTA), serve as a signal peptide directing secretion. A lipid anchor (N-palmitoyl cysteine) is attached at C21. Residue C21 is the site of S-diacylglycerol cysteine attachment. In terms of domain architecture, NodB homology spans 107 to 349 (KAVVLTFDDG…IQRVKDMQIS (243 aa)).

This sequence belongs to the polysaccharide deacetylase family.

It localises to the cell outer membrane. In terms of biological role, catalyzes the N-deacetylation of poly-beta-1,6-N-acetyl-D-glucosamine (PGA), a biofilm adhesin polysaccharide. N-deacetylation promotes PGA export through the PgaA porin. This is Poly-beta-1,6-N-acetyl-D-glucosamine N-deacetylase (pgaB) from Escherichia coli (strain K12).